Reading from the N-terminus, the 334-residue chain is Probable tRNA pseudouridine synthase B (334 aa).

Asp82 (nucleophile) is an active-site residue. A PUA domain is found at 250–325; the sequence is LPKVWIRDSA…IAVDVDKVFM (76 aa).

Belongs to the pseudouridine synthase TruB family. Type 2 subfamily.

It carries out the reaction uridine(55) in tRNA = pseudouridine(55) in tRNA. Could be responsible for synthesis of pseudouridine from uracil-55 in the psi GC loop of transfer RNAs. In Thermococcus gammatolerans (strain DSM 15229 / JCM 11827 / EJ3), this protein is Probable tRNA pseudouridine synthase B.